A 207-amino-acid polypeptide reads, in one-letter code: MGMLEARELLCERDERTLFSGLSFTLNAGEWVQITGSNGAGKTTLLRLLTGLSRPDAGEVLWQGQPLHQVRDSYHQNLLWIGHQPGIKTRLTALENLHFYHRDGDTAQCLEALAQAGLAGFDDIPVNQLSAGQQRRVALARLWLTRATLWILDEPFTAIDVNGVDRLTQRMAQHTEQGGIVILTTHQPLNVAESKIRRISLTQTRAA.

Positions 4 to 207 (LEARELLCER…RISLTQTRAA (204 aa)) constitute an ABC transporter domain. 36–43 (GSNGAGKT) lines the ATP pocket.

The protein belongs to the ABC transporter superfamily. CcmA exporter (TC 3.A.1.107) family. In terms of assembly, the complex is composed of two ATP-binding proteins (CcmA) and two transmembrane proteins (CcmB).

The protein localises to the cell inner membrane. The enzyme catalyses heme b(in) + ATP + H2O = heme b(out) + ADP + phosphate + H(+). In terms of biological role, part of the ABC transporter complex CcmAB involved in the biogenesis of c-type cytochromes; once thought to export heme, this seems not to be the case, but its exact role is uncertain. Responsible for energy coupling to the transport system. This is Cytochrome c biogenesis ATP-binding export protein CcmA from Shigella sonnei (strain Ss046).